A 353-amino-acid chain; its full sequence is Sulfate/thiosulfate import ATP-binding protein CysA (353 aa).

The ABC transporter domain occupies 3–237; sequence IQVKNIEKHF…PATPFVFDFL (235 aa). Residue 35–42 participates in ATP binding; that stretch reads GPSGCGKT.

It belongs to the ABC transporter superfamily. Sulfate/tungstate importer (TC 3.A.1.6) family. As to quaternary structure, the complex is composed of two ATP-binding proteins (CysA), two transmembrane proteins (CysT and CysW) and a solute-binding protein (CysP).

It is found in the cell inner membrane. It carries out the reaction sulfate(out) + ATP + H2O = sulfate(in) + ADP + phosphate + H(+). The catalysed reaction is thiosulfate(out) + ATP + H2O = thiosulfate(in) + ADP + phosphate + H(+). Functionally, part of the ABC transporter complex CysAWTP involved in sulfate/thiosulfate import. Responsible for energy coupling to the transport system. The polypeptide is Sulfate/thiosulfate import ATP-binding protein CysA (Acinetobacter baylyi (strain ATCC 33305 / BD413 / ADP1)).